The sequence spans 275 residues: uncharacterized protein (275 aa).

Glutamate 71, aspartate 85, isoleucine 87, and aspartate 88 together coordinate Mg(2+). Residue glutamate 71 participates in substrate binding. 87–90 is a binding site for substrate; sequence IDGT. 3 consecutive transmembrane segments (helical) span residues 87–107, 112–132, and 178–198; these read IDGTANFLSGIPLWAVSIAFV, PVLGAVALPALDTLLWASVDG, and IVCLGSCAAALAMVAAGRLAG. A Mg(2+)-binding site is contributed by aspartate 208. Aspartate 208 is a substrate binding site.

It belongs to the inositol monophosphatase superfamily.

It is found in the cell membrane. This is an uncharacterized protein from Sinorhizobium fredii (strain NBRC 101917 / NGR234).